A 438-amino-acid chain; its full sequence is Na(+)/H(+) antiporter NhaA (438 aa).

11 helical membrane passes run 23 to 43 (FGGI…NSFL), 62 to 82 (FFIG…LFFL), 104 to 124 (SFPV…YFFL), 133 to 153 (GFGI…MLLG), 162 to 182 (VFLI…IALF), 185 to 205 (TNLK…LAVL), 221 to 241 (VLLW…AVIL), 302 to 322 (FLAP…NAGV), 337 to 357 (LGVI…ITFI), 372 to 392 (WWHI…SMFI), and 410 to 430 (IAIL…LFAL).

Belongs to the NhaA Na(+)/H(+) (TC 2.A.33) antiporter family.

The protein resides in the cell inner membrane. It carries out the reaction Na(+)(in) + 2 H(+)(out) = Na(+)(out) + 2 H(+)(in). Its function is as follows. Na(+)/H(+) antiporter that extrudes sodium in exchange for external protons. This chain is Na(+)/H(+) antiporter NhaA, found in Helicobacter pylori (strain ATCC 700392 / 26695) (Campylobacter pylori).